The chain runs to 397 residues: Acetyl-CoA acetyltransferase (397 aa).

Residue Cys-95 is the Acyl-thioester intermediate of the active site. 2 residues coordinate CoA: Tyr-187 and Lys-230. Residue Tyr-187 participates in K(+) binding. Residues Ala-246, Gly-247, and Ala-249 each contribute to the K(+) site. Residue Ser-250 participates in CoA binding. Val-347 lines the K(+) pocket. Residues His-351 and Cys-379 each act as proton acceptor in the active site.

Belongs to the thiolase-like superfamily. Thiolase family.

Its subcellular location is the peroxisome. It catalyses the reaction 2 acetyl-CoA = acetoacetyl-CoA + CoA. In terms of biological role, essential for n-decane utilization. This is Acetyl-CoA acetyltransferase (PAT1) from Yarrowia lipolytica (strain CLIB 122 / E 150) (Yeast).